A 227-amino-acid chain; its full sequence is Ribose-5-phosphate isomerase A (227 aa).

Substrate contacts are provided by residues 26-29, 82-85, and 95-98; these read TGST, DGAD, and KGGG. The active-site Proton acceptor is E104. K122 is a substrate binding site.

Belongs to the ribose 5-phosphate isomerase family. Homodimer.

The catalysed reaction is aldehydo-D-ribose 5-phosphate = D-ribulose 5-phosphate. It functions in the pathway carbohydrate degradation; pentose phosphate pathway; D-ribose 5-phosphate from D-ribulose 5-phosphate (non-oxidative stage): step 1/1. Functionally, catalyzes the reversible conversion of ribose-5-phosphate to ribulose 5-phosphate. The sequence is that of Ribose-5-phosphate isomerase A from Streptococcus pyogenes serotype M1.